A 674-amino-acid polypeptide reads, in one-letter code: Cysteine-rich receptor-like protein kinase 6 (674 aa).

Residues 1–24 (MSSLISFNFLFLFSFLTSSFTASA) form the signal peptide. Topologically, residues 25 to 289 (QDPFYLNHYC…LPGKSGNSTV (265 aa)) are extracellular. 2 Gnk2-homologous domains span residues 28-132 (FYLN…HKNI) and 139-245 (NEGE…LYPF). N-linked (GlcNAc...) asparagine glycosylation is found at N36, N43, N61, N70, N104, N178, and N247. Over residues 254 to 266 (PPLPPPPPPPPPR) the composition is skewed to pro residues. The interval 254-284 (PPLPPPPPPPPPRESLVSTPPISSSSLPGKS) is disordered. The segment covering 268 to 284 (SLVSTPPISSSSLPGKS) has biased composition (low complexity). Residue N286 is glycosylated (N-linked (GlcNAc...) asparagine). The helical transmembrane segment at 290–310 (LVVAVVVLAVLLFIALVGYCF) threads the bilayer. At 311–674 (LAKKKKKTFD…DESITDLYPR (364 aa)) the chain is on the cytoplasmic side. One can recognise a Protein kinase domain in the interval 351 to 637 (FAESNKIGRG…TLPVPRQPGF (287 aa)). ATP is bound by residues 357 to 365 (IGRGGFGEV) and K379. Y424 carries the post-translational modification Phosphotyrosine. D476 functions as the Proton acceptor in the catalytic mechanism. Phosphoserine is present on S480. Phosphothreonine is present on T516. Residue Y524 is modified to Phosphotyrosine. The interval 648 to 674 (LDSDQSTTTKSFPASIDDESITDLYPR) is disordered. Residues 650 to 659 (SDQSTTTKSF) are compositionally biased toward polar residues.

It belongs to the protein kinase superfamily. Ser/Thr protein kinase family. CRK subfamily.

It localises to the membrane. The enzyme catalyses L-seryl-[protein] + ATP = O-phospho-L-seryl-[protein] + ADP + H(+). It catalyses the reaction L-threonyl-[protein] + ATP = O-phospho-L-threonyl-[protein] + ADP + H(+). The protein is Cysteine-rich receptor-like protein kinase 6 (CRK6) of Arabidopsis thaliana (Mouse-ear cress).